A 601-amino-acid polypeptide reads, in one-letter code: Proline--tRNA ligase (601 aa).

It belongs to the class-II aminoacyl-tRNA synthetase family. ProS type 1 subfamily. As to quaternary structure, homodimer.

It is found in the cytoplasm. The catalysed reaction is tRNA(Pro) + L-proline + ATP = L-prolyl-tRNA(Pro) + AMP + diphosphate. Functionally, catalyzes the attachment of proline to tRNA(Pro) in a two-step reaction: proline is first activated by ATP to form Pro-AMP and then transferred to the acceptor end of tRNA(Pro). As ProRS can inadvertently accommodate and process non-cognate amino acids such as alanine and cysteine, to avoid such errors it has two additional distinct editing activities against alanine. One activity is designated as 'pretransfer' editing and involves the tRNA(Pro)-independent hydrolysis of activated Ala-AMP. The other activity is designated 'posttransfer' editing and involves deacylation of mischarged Ala-tRNA(Pro). The misacylated Cys-tRNA(Pro) is not edited by ProRS. The sequence is that of Proline--tRNA ligase from Tropheryma whipplei (strain TW08/27) (Whipple's bacillus).